Here is a 311-residue protein sequence, read N- to C-terminus: Methionyl-tRNA formyltransferase (311 aa).

(6S)-5,6,7,8-tetrahydrofolate is bound at residue 110–113 (SLLP).

The protein belongs to the Fmt family.

The enzyme catalyses L-methionyl-tRNA(fMet) + (6R)-10-formyltetrahydrofolate = N-formyl-L-methionyl-tRNA(fMet) + (6S)-5,6,7,8-tetrahydrofolate + H(+). Functionally, attaches a formyl group to the free amino group of methionyl-tRNA(fMet). The formyl group appears to play a dual role in the initiator identity of N-formylmethionyl-tRNA by promoting its recognition by IF2 and preventing the misappropriation of this tRNA by the elongation apparatus. The polypeptide is Methionyl-tRNA formyltransferase (Acidobacterium capsulatum (strain ATCC 51196 / DSM 11244 / BCRC 80197 / JCM 7670 / NBRC 15755 / NCIMB 13165 / 161)).